A 445-amino-acid chain; its full sequence is MRWLPGLLLIASIGFHQSLADRVLVLGETAAVKDTHSVFLNSVKERGHELTVRAADDSQLALFKHGQLIFDHLFILAPGVQVFGGSLSPSEISKFVDAGGNVLVAAGSNIGDALREIAAEHGFEFEEAGTSVIDHHNYDQTLDSGDHTTLVVGKDQLISAELIVGNSAKLHPVLFKGIGLVAGKTNNLALSIVRASGTAYSYDPKAVRATNPSIAGSRTLLVGGLQSRNNARIVFTGSSELFSNTFFSAKTNSVNPSVQGAQSGNADFATAITRWVMKESGVLRVKTVNHHKKGETVPPVEGYFITEDVVYTIEIEELKNGKWVPFQGKDVQLEFVRIDPFVRATLKNSNGRLSVAFKLPDVLGVFKFLVDYRRVGYTHLYDVQQVSVRPLWHTQYERFIRSAYPYYASSFSMMAGLVLFSIVYLYHKDTPVKGAKVLDSEKKKN.

Positions 1–20 (MRWLPGLLLIASIGFHQSLA) are cleaved as a signal peptide. The Lumenal portion of the chain corresponds to 21–405 (DRVLVLGETA…YERFIRSAYP (385 aa)). Residues 406 to 426 (YYASSFSMMAGLVLFSIVYLY) form a helical membrane-spanning segment. The Cytoplasmic segment spans residues 427 to 445 (HKDTPVKGAKVLDSEKKKN).

Belongs to the DDOST 48 kDa subunit family. As to quaternary structure, component of the oligosaccharyltransferase (OST) complex.

Its subcellular location is the endoplasmic reticulum membrane. It functions in the pathway protein modification; protein glycosylation. Functionally, subunit of the oligosaccharyl transferase (OST) complex that catalyzes the initial transfer of a defined glycan (Glc(3)Man(9)GlcNAc(2) in eukaryotes) from the lipid carrier dolichol-pyrophosphate to an asparagine residue within an Asn-X-Ser/Thr consensus motif in nascent polypeptide chains, the first step in protein N-glycosylation. N-glycosylation occurs cotranslationally and the complex associates with the Sec61 complex at the channel-forming translocon complex that mediates protein translocation across the endoplasmic reticulum (ER). All subunits are required for a maximal enzyme activity. Required for the assembly of both SST3A- and SS3B-containing OST complexes. Required for normal lifespan. This is Dolichyl-diphosphooligosaccharide--protein glycosyltransferase 48 kDa subunit from Caenorhabditis elegans.